The primary structure comprises 371 residues: 3-isopropylmalate dehydrogenase (371 aa).

Position 55 is a phosphothreonine (T55). Residue 78 to 89 (GPEWTNPNCRPE) participates in NAD(+) binding. Substrate-binding residues include R96, R106, R135, and D224. D224, D249, and D253 together coordinate Mg(2+). 290–302 (GSAPDIAGKGIVN) serves as a coordination point for NAD(+).

Belongs to the isocitrate and isopropylmalate dehydrogenases family. As to quaternary structure, homodimer. It depends on Mg(2+) as a cofactor. Mn(2+) serves as cofactor.

It localises to the cytoplasm. The enzyme catalyses (2R,3S)-3-isopropylmalate + NAD(+) = 4-methyl-2-oxopentanoate + CO2 + NADH. It functions in the pathway amino-acid biosynthesis; L-leucine biosynthesis; L-leucine from 3-methyl-2-oxobutanoate: step 3/4. Its function is as follows. Catalyzes the oxidation of 3-carboxy-2-hydroxy-4-methylpentanoate (3-isopropylmalate) to 3-carboxy-4-methyl-2-oxopentanoate. The product decarboxylates to 4-methyl-2 oxopentanoate. This is 3-isopropylmalate dehydrogenase (leu1) from Schizosaccharomyces pombe (strain 972 / ATCC 24843) (Fission yeast).